The following is a 238-amino-acid chain: Ribonuclease 3 (238 aa).

The 127-residue stretch at 4 to 130 (IQTLFQTLNI…LFGAIYLDLG (127 aa)) folds into the RNase III domain. E45 contacts Mg(2+). D49 is an active-site residue. Residues D116 and E119 each contribute to the Mg(2+) site. The active site involves E119. One can recognise a DRBM domain in the interval 154–222 (DFKTQLQEIV…AQQALSKVAK (69 aa)). A disordered region spans residues 215 to 238 (QALSKVAKPKDLLNNKGGKEKELQ). Positions 222–238 (KPKDLLNNKGGKEKELQ) are enriched in basic and acidic residues.

The protein belongs to the ribonuclease III family. As to quaternary structure, homodimer. Mg(2+) is required as a cofactor.

It localises to the cytoplasm. The catalysed reaction is Endonucleolytic cleavage to 5'-phosphomonoester.. Its function is as follows. Digests double-stranded RNA. Involved in the processing of primary rRNA transcript to yield the immediate precursors to the large and small rRNAs (23S and 16S). Processes some mRNAs, and tRNAs when they are encoded in the rRNA operon. Processes pre-crRNA and tracrRNA of type II CRISPR loci if present in the organism. The sequence is that of Ribonuclease 3 from Onion yellows phytoplasma (strain OY-M).